Consider the following 92-residue polypeptide: Pyrimidine/purine nucleoside phosphorylase (92 aa).

The protein belongs to the nucleoside phosphorylase PpnP family.

The enzyme catalyses a purine D-ribonucleoside + phosphate = a purine nucleobase + alpha-D-ribose 1-phosphate. It catalyses the reaction adenosine + phosphate = alpha-D-ribose 1-phosphate + adenine. It carries out the reaction cytidine + phosphate = cytosine + alpha-D-ribose 1-phosphate. The catalysed reaction is guanosine + phosphate = alpha-D-ribose 1-phosphate + guanine. The enzyme catalyses inosine + phosphate = alpha-D-ribose 1-phosphate + hypoxanthine. It catalyses the reaction thymidine + phosphate = 2-deoxy-alpha-D-ribose 1-phosphate + thymine. It carries out the reaction uridine + phosphate = alpha-D-ribose 1-phosphate + uracil. The catalysed reaction is xanthosine + phosphate = alpha-D-ribose 1-phosphate + xanthine. Catalyzes the phosphorolysis of diverse nucleosides, yielding D-ribose 1-phosphate and the respective free bases. Can use uridine, adenosine, guanosine, cytidine, thymidine, inosine and xanthosine as substrates. Also catalyzes the reverse reactions. In Rhodopirellula baltica (strain DSM 10527 / NCIMB 13988 / SH1), this protein is Pyrimidine/purine nucleoside phosphorylase.